A 107-amino-acid polypeptide reads, in one-letter code: UPF0145 protein Spro_1658 (107 aa).

It belongs to the UPF0145 family.

The protein is UPF0145 protein Spro_1658 of Serratia proteamaculans (strain 568).